The chain runs to 294 residues: N-acetylmuramic acid 6-phosphate etherase (294 aa).

Residues 54–217 (VIKSFEEEGR…STASMIGVGK (164 aa)) form the SIS domain. E82 acts as the Proton donor in catalysis. E113 is an active-site residue.

It belongs to the GCKR-like family. MurNAc-6-P etherase subfamily. Homodimer.

The catalysed reaction is N-acetyl-D-muramate 6-phosphate + H2O = N-acetyl-D-glucosamine 6-phosphate + (R)-lactate. Its pathway is amino-sugar metabolism; N-acetylmuramate degradation. Functionally, specifically catalyzes the cleavage of the D-lactyl ether substituent of MurNAc 6-phosphate, producing GlcNAc 6-phosphate and D-lactate. This is N-acetylmuramic acid 6-phosphate etherase from Bacillus cereus (strain B4264).